The primary structure comprises 150 residues: Phosphopantetheine adenylyltransferase (150 aa).

Residue S10 coordinates substrate. ATP-binding positions include 10–11 and H18; that span reads SF. Substrate contacts are provided by K42, T74, and R88. ATP-binding positions include 89-91, E99, and 124-130; these read GLR and LAYISSS.

This sequence belongs to the bacterial CoaD family. As to quaternary structure, homohexamer. Mg(2+) serves as cofactor.

It localises to the cytoplasm. The catalysed reaction is (R)-4'-phosphopantetheine + ATP + H(+) = 3'-dephospho-CoA + diphosphate. It functions in the pathway cofactor biosynthesis; coenzyme A biosynthesis; CoA from (R)-pantothenate: step 4/5. Reversibly transfers an adenylyl group from ATP to 4'-phosphopantetheine, yielding dephospho-CoA (dPCoA) and pyrophosphate. This Cytophaga hutchinsonii (strain ATCC 33406 / DSM 1761 / CIP 103989 / NBRC 15051 / NCIMB 9469 / D465) protein is Phosphopantetheine adenylyltransferase.